The chain runs to 500 residues: Abscisic acid 8'-hydroxylase 3 (500 aa).

A helical membrane pass occupies residues 3 to 23 (ASFVIVIVISFFISLAFMCYV). Cys426 is a binding site for heme.

Belongs to the cytochrome P450 family. The cofactor is heme.

Its subcellular location is the membrane. It carries out the reaction 2-cis-(+)-abscisate + reduced [NADPH--hemoprotein reductase] + O2 = (+)-8'-hydroxyabscisate + oxidized [NADPH--hemoprotein reductase] + H2O + H(+). It functions in the pathway plant hormone degradation; abscisic acid degradation. Involved in the oxidative degradation of abscisic acid. The sequence is that of Abscisic acid 8'-hydroxylase 3 (CYP707A7) from Oryza sativa subsp. indica (Rice).